Here is a 253-residue protein sequence, read N- to C-terminus: Chitooligosaccharide deacetylase (253 aa).

His-61 and His-126 together coordinate Mg(2+).

This sequence belongs to the YdjC deacetylase family. ChbG subfamily. In terms of assembly, homodimer. Requires Mg(2+) as cofactor.

The protein localises to the cytoplasm. The catalysed reaction is N,N'-diacetylchitobiose + H2O = N-acetyl-beta-D-glucosaminyl-(1-&gt;4)-D-glucosamine + acetate. It carries out the reaction diacetylchitobiose-6'-phosphate + H2O = N'-monoacetylchitobiose-6'-phosphate + acetate. Its pathway is glycan degradation; chitin degradation. Functionally, involved in the degradation of chitin. ChbG is essential for growth on the acetylated chitooligosaccharides chitobiose and chitotriose but is dispensable for growth on cellobiose and chitosan dimer, the deacetylated form of chitobiose. Deacetylation of chitobiose-6-P and chitotriose-6-P is necessary for both the activation of the chb promoter by the regulatory protein ChbR and the hydrolysis of phosphorylated beta-glucosides by the phospho-beta-glucosidase ChbF. Catalyzes the removal of only one acetyl group from chitobiose-6-P to yield monoacetylchitobiose-6-P, the inducer of ChbR and the substrate of ChbF. In Yersinia enterocolitica serotype O:8 / biotype 1B (strain NCTC 13174 / 8081), this protein is Chitooligosaccharide deacetylase.